A 356-amino-acid polypeptide reads, in one-letter code: MSYHRMTLSKFLLEQRKKGVIDPDLGSLINDIESACKYVAAAVSKGKLISQEVNVTINVQGEEQKPLDVIANEIFLKICEQGDQLQGMVSEEMESPYIIPPEHRRGKYLLIYDPLDGSSNLDVNLTVGSIFSVLKAPESGEPLEEKHFLRPGREQLAAGFTLYGPSVMFILTLGNGVHGFTLDREVGIFTLTHPDMRITPSTKEFAINASNERFWEPPVRRYVEECIKGKTGPRGKDFNMRWIASMVAEVYRILIRGGLFMYPRDTKDLSKPGRLRLLYEANPMGFIVEQAGGMISTGRESILDIVPRSLHQRIAVILGSKEEVELLNRYHNDYDSGKQEEFESPLFSTRSLFRNP.

4 residues coordinate Mg(2+): Glu-91, Asp-113, Leu-115, and Asp-116. Substrate-binding positions include 116–119 and Asn-208; that span reads DGSS. Glu-280 provides a ligand contact to Mg(2+).

Belongs to the FBPase class 1 family. As to quaternary structure, homotetramer. It depends on Mg(2+) as a cofactor.

It localises to the cytoplasm. The catalysed reaction is beta-D-fructose 1,6-bisphosphate + H2O = beta-D-fructose 6-phosphate + phosphate. It functions in the pathway carbohydrate biosynthesis; gluconeogenesis. This chain is Fructose-1,6-bisphosphatase class 1, found in Methylacidiphilum infernorum (isolate V4) (Methylokorus infernorum (strain V4)).